A 107-amino-acid chain; its full sequence is uncharacterized protein (107 aa).

The interval 23–64 (SASSSSSTRIPSGFASATSSKSNSSTKSSPSPINSFNNKTNN) is disordered. Residues 37 to 57 (ASATSSKSNSSTKSSPSPINS) show a composition bias toward low complexity. A helical transmembrane segment spans residues 76 to 98 (LAFGIVEFMVFNGMISTITTTTF).

The protein resides in the membrane. This is an uncharacterized protein from Dictyostelium discoideum (Social amoeba).